A 557-amino-acid chain; its full sequence is Syntaxin-binding protein 4 (557 aa).

Phosphoserine occurs at positions 10 and 12. The region spanning 19 to 105 is the PDZ domain; that stretch reads AFRVITVTKE…RSESPWEIAF (87 aa). Serine 99 carries the phosphoserine; by PKB/AKT2 modification. The span at 142-154 shows a compositional bias: low complexity; that stretch reads PSETLLPKTSSTP. The interval 142-214 is disordered; the sequence is PSETLLPKTS…SGPQGKISLN (73 aa). Residues 179-194 show a composition bias toward polar residues; it reads SPITSLDNSPADTSNA. Serine 216 is modified (phosphoserine). Residues 298–408 are a coiled coil; that stretch reads ADEVGKLRQE…NKESVQDLRK (111 aa). Residue serine 467 is modified to Phosphoserine. One can recognise a WW domain in the interval 500–533; that stretch reads DCLPYGWEEAYTADGIKYFINHVTQTTSWIHPVM.

As to quaternary structure, interacts with STX4A. In terms of processing, phosphorylated on Ser-99 by PKB/AKT2 after insulin treatment. Phosphorylation on Ser-99 abolishes the interaction with STX4A. In terms of tissue distribution, detected in skeletal muscle, heart, testis, adipocytes and pancreatic islet cells.

The protein resides in the cytoplasm. Plays a role in the translocation of transport vesicles from the cytoplasm to the plasma membrane. Inhibits the translocation of SLC2A4 from intracellular vesicles to the plasma membrane by STX4A binding and preventing the interaction between STX4A and VAMP2. Stimulation with insulin disrupts the interaction with STX4A, leading to increased levels of SLC2A4 at the plasma membrane. May also play a role in the regulation of insulin release by pancreatic beta cells after stimulation by glucose. The sequence is that of Syntaxin-binding protein 4 (Stxbp4) from Mus musculus (Mouse).